The chain runs to 305 residues: GMP synthase [glutamine-hydrolyzing] subunit B (305 aa).

One can recognise a GMPS ATP-PPase domain in the interval 2–185; the sequence is VETEEFIAEA…LGLEEVISER (184 aa). 29–35 serves as a coordination point for ATP; sequence SGGVDSS.

As to quaternary structure, heterodimer composed of a glutamine amidotransferase subunit (A) and a GMP-binding subunit (B).

It catalyses the reaction XMP + L-glutamine + ATP + H2O = GMP + L-glutamate + AMP + diphosphate + 2 H(+). It participates in purine metabolism; GMP biosynthesis; GMP from XMP (L-Gln route): step 1/1. Its function is as follows. Catalyzes the synthesis of GMP from XMP. The sequence is that of GMP synthase [glutamine-hydrolyzing] subunit B from Halorubrum lacusprofundi (strain ATCC 49239 / DSM 5036 / JCM 8891 / ACAM 34).